The primary structure comprises 408 residues: Arginine biosynthesis bifunctional protein ArgJ (408 aa).

Residues Thr158, Lys184, Thr195, Glu281, Asn403, and Thr408 each coordinate substrate. Residue Thr195 is the Nucleophile of the active site.

Belongs to the ArgJ family. Heterotetramer of two alpha and two beta chains.

It is found in the cytoplasm. It carries out the reaction N(2)-acetyl-L-ornithine + L-glutamate = N-acetyl-L-glutamate + L-ornithine. The catalysed reaction is L-glutamate + acetyl-CoA = N-acetyl-L-glutamate + CoA + H(+). It functions in the pathway amino-acid biosynthesis; L-arginine biosynthesis; L-ornithine and N-acetyl-L-glutamate from L-glutamate and N(2)-acetyl-L-ornithine (cyclic): step 1/1. The protein operates within amino-acid biosynthesis; L-arginine biosynthesis; N(2)-acetyl-L-ornithine from L-glutamate: step 1/4. Functionally, catalyzes two activities which are involved in the cyclic version of arginine biosynthesis: the synthesis of N-acetylglutamate from glutamate and acetyl-CoA as the acetyl donor, and of ornithine by transacetylation between N(2)-acetylornithine and glutamate. This chain is Arginine biosynthesis bifunctional protein ArgJ, found in Bacillus cereus (strain ZK / E33L).